Here is a 1297-residue protein sequence, read N- to C-terminus: DNA-directed RNA polymerase subunit beta' (1297 aa).

4 residues coordinate Zn(2+): C60, C62, C75, and C78. Mg(2+) is bound by residues D535, D537, and D539. 4 residues coordinate Zn(2+): C883, C961, C968, and C971.

Belongs to the RNA polymerase beta' chain family. As to quaternary structure, the RNAP catalytic core consists of 2 alpha, 1 beta, 1 beta' and 1 omega subunit. When a sigma factor is associated with the core the holoenzyme is formed, which can initiate transcription. The cofactor is Mg(2+). Requires Zn(2+) as cofactor.

The catalysed reaction is RNA(n) + a ribonucleoside 5'-triphosphate = RNA(n+1) + diphosphate. In terms of biological role, DNA-dependent RNA polymerase catalyzes the transcription of DNA into RNA using the four ribonucleoside triphosphates as substrates. This Salinispora arenicola (strain CNS-205) protein is DNA-directed RNA polymerase subunit beta'.